The following is a 616-amino-acid chain: Chaperone protein DnaK (616 aa).

The residue at position 175 (Thr175) is a Phosphothreonine; by autocatalysis. A disordered region spans residues 579–605 (GGDPSQAGGFDPNAAGGAQQAPHDDNV).

Belongs to the heat shock protein 70 family.

In terms of biological role, acts as a chaperone. The polypeptide is Chaperone protein DnaK (Clostridium botulinum (strain Alaska E43 / Type E3)).